Consider the following 126-residue polypeptide: MALNKAEILDAIAGMTVLELSELIKEMEEKFGVSAAAAAVAVAAPAAGGAAAAAEEQTEFTVVLVEAGANKVSVIKAVRELTGLGLKEAKDLVDGAPKPVKEALPKADAEAAKKKLEEAGAKVEVK.

It belongs to the bacterial ribosomal protein bL12 family. As to quaternary structure, homodimer. Part of the ribosomal stalk of the 50S ribosomal subunit. Forms a multimeric L10(L12)X complex, where L10 forms an elongated spine to which 2 to 4 L12 dimers bind in a sequential fashion. Binds GTP-bound translation factors.

Its function is as follows. Forms part of the ribosomal stalk which helps the ribosome interact with GTP-bound translation factors. Is thus essential for accurate translation. The polypeptide is Large ribosomal subunit protein bL12 (Bordetella avium (strain 197N)).